The chain runs to 180 residues: ATP synthase subunit b (180 aa).

The chain crosses the membrane as a helical span at residues 26–48 (SMILFWKAVNTVILLGLVYYFGG).

It belongs to the ATPase B chain family. As to quaternary structure, F-type ATPases have 2 components, F(1) - the catalytic core - and F(0) - the membrane proton channel. F(1) has five subunits: alpha(3), beta(3), gamma(1), delta(1), epsilon(1). F(0) has three main subunits: a(1), b(2) and c(10-14). The alpha and beta chains form an alternating ring which encloses part of the gamma chain. F(1) is attached to F(0) by a central stalk formed by the gamma and epsilon chains, while a peripheral stalk is formed by the delta and b chains.

It localises to the cell inner membrane. In terms of biological role, f(1)F(0) ATP synthase produces ATP from ADP in the presence of a proton or sodium gradient. F-type ATPases consist of two structural domains, F(1) containing the extramembraneous catalytic core and F(0) containing the membrane proton channel, linked together by a central stalk and a peripheral stalk. During catalysis, ATP synthesis in the catalytic domain of F(1) is coupled via a rotary mechanism of the central stalk subunits to proton translocation. Its function is as follows. Component of the F(0) channel, it forms part of the peripheral stalk, linking F(1) to F(0). In Sulfurihydrogenibium sp. (strain YO3AOP1), this protein is ATP synthase subunit b.